A 123-amino-acid polypeptide reads, in one-letter code: MATAAGAAYFQRGSLFWFTVITLSFGYYTWVVFWPQSIPYQNLGPLGPFTQYLVDHHHTLLCNGYWLAWLIHVGESLYAIVLCKHKGITSGRAQLLWFLQTFFFGIASLTILIAYKGKRQKQT.

Alanine 2 carries the post-translational modification N-acetylalanine. The next 3 helical transmembrane spans lie at leucine 15 to proline 35, leucine 61 to valine 81, and leucine 95 to tyrosine 115.

The protein localises to the membrane. The sequence is that of Transmembrane protein 254 (TMEM254) from Pongo abelii (Sumatran orangutan).